The sequence spans 473 residues: Photosystem II CP43 reaction center protein (473 aa).

Positions 1 to 14 (MKTLYSLRRFYHVE) are excised as a propeptide. At Thr15 the chain carries N-acetylthreonine. A Phosphothreonine modification is found at Thr15. A run of 5 helical transmembrane segments spans residues 69 to 93 (LFEV…PHLA), 134 to 155 (LLGP…KDRN), 178 to 200 (KALY…RKIT), 255 to 275 (KPFA…LSYS), and 291 to 312 (WFNN…ASQA). Glu367 contacts [CaMn4O5] cluster. Residues 447 to 471 (RARAAAAGFEKGIDRDFEPVLSMTP) form a helical membrane-spanning segment.

Belongs to the PsbB/PsbC family. PsbC subfamily. In terms of assembly, PSII is composed of 1 copy each of membrane proteins PsbA, PsbB, PsbC, PsbD, PsbE, PsbF, PsbH, PsbI, PsbJ, PsbK, PsbL, PsbM, PsbT, PsbX, PsbY, PsbZ, Psb30/Ycf12, at least 3 peripheral proteins of the oxygen-evolving complex and a large number of cofactors. It forms dimeric complexes. Requires Binds multiple chlorophylls and provides some of the ligands for the Ca-4Mn-5O cluster of the oxygen-evolving complex. It may also provide a ligand for a Cl- that is required for oxygen evolution. PSII binds additional chlorophylls, carotenoids and specific lipids. as cofactor.

It is found in the plastid. The protein resides in the chloroplast thylakoid membrane. Functionally, one of the components of the core complex of photosystem II (PSII). It binds chlorophyll and helps catalyze the primary light-induced photochemical processes of PSII. PSII is a light-driven water:plastoquinone oxidoreductase, using light energy to abstract electrons from H(2)O, generating O(2) and a proton gradient subsequently used for ATP formation. The polypeptide is Photosystem II CP43 reaction center protein (Arabis hirsuta (Hairy rock-cress)).